The chain runs to 199 residues: LIM domain-containing protein E (199 aa).

Residues 5–65 (VKCGACAKTA…PVHTPKVSAT (61 aa)) form the LIM zinc-binding domain. The interval 134 to 199 (YAVFGADGQP…EEEQQYEEEQ (66 aa)) is disordered. Composition is skewed to low complexity over residues 146–155 (EQQEQQQYTE) and 163–174 (EEQQYQEEQQQY). The segment covering 175 to 199 (QEEEQQYQEEEQQYQEEEQQYEEEQ) has biased composition (acidic residues).

May interact with rac1A.

It is found in the cytoplasm. The protein resides in the cell cortex. It localises to the nucleus. The protein localises to the cell projection. Its subcellular location is the lamellipodium. It is found in the filopodium. The protein resides in the cytoskeleton. Its function is as follows. Associates with the actin cytoskeleton and may regulate actin polymerization in lamellipodia, through a rac1-dependent signaling pathway. May play a role in cell motility. Involved in cytokinesis by regulating the microtubule system and linking it to the cortical actin network. The chain is LIM domain-containing protein E (limE) from Dictyostelium discoideum (Social amoeba).